The sequence spans 319 residues: HTH-type transcriptional regulator YidZ (319 aa).

Residues L8 to T65 form the HTH lysR-type domain. The H-T-H motif DNA-binding region spans V25 to A44.

It belongs to the LysR transcriptional regulatory family.

Its function is as follows. Involved in anaerobic NO protection. The protein is HTH-type transcriptional regulator YidZ of Salmonella typhi.